A 337-amino-acid polypeptide reads, in one-letter code: Heat-inducible transcription repressor HrcA (337 aa).

The protein belongs to the HrcA family.

Functionally, negative regulator of class I heat shock genes (grpE-dnaK-dnaJ and groELS operons). Prevents heat-shock induction of these operons. In Arthrobacter sp. (strain FB24), this protein is Heat-inducible transcription repressor HrcA.